Here is a 101-residue protein sequence, read N- to C-terminus: uncharacterized protein (101 aa).

A helical membrane pass occupies residues 58–80 (VFPSLNIIILMSDALMFFLRSSI).

Its subcellular location is the membrane. This is an uncharacterized protein from Saccharomyces cerevisiae (strain ATCC 204508 / S288c) (Baker's yeast).